The primary structure comprises 212 residues: Probable nicotinate-nucleotide adenylyltransferase (212 aa).

This sequence belongs to the NadD family.

The catalysed reaction is nicotinate beta-D-ribonucleotide + ATP + H(+) = deamido-NAD(+) + diphosphate. It functions in the pathway cofactor biosynthesis; NAD(+) biosynthesis; deamido-NAD(+) from nicotinate D-ribonucleotide: step 1/1. Its function is as follows. Catalyzes the reversible adenylation of nicotinate mononucleotide (NaMN) to nicotinic acid adenine dinucleotide (NaAD). The polypeptide is Probable nicotinate-nucleotide adenylyltransferase (Saccharopolyspora erythraea (strain ATCC 11635 / DSM 40517 / JCM 4748 / NBRC 13426 / NCIMB 8594 / NRRL 2338)).